A 266-amino-acid chain; its full sequence is MLTYPQIDPVALAIGPLKIHWYGLMYLIGIGGAWLLASRRMKRFDPTWTKERLSDLVFWVACGVILGGRLGYVLFYNLDEYIANPTLIFEVWKGGMSFHGGLLGVMLAVWWFGKRHGKSFFQLMDFIAPLVPIGLGAGRIGNFINSELWGKVSDVPWAMVFPNGGPLPRHPSQLYQFALEGVALFVILWLFTRKPRPTASVSGLFVLCYGIFRFVVEFVRVPDAQLGYLAWGWLTMGQVLCVPMVLAGIALMVWAYRRDAAQPKAA.

Helical transmembrane passes span 10–30 (VALA…LIGI), 56–76 (LVFW…VLFY), 92–112 (WKGG…VWWF), 120–140 (FFQL…AGRI), 171–191 (PSQL…LWLF), 199–219 (ASVS…VEFV), and 233–253 (WLTM…ALMV). Arginine 139 lines the a 1,2-diacyl-sn-glycero-3-phospho-(1'-sn-glycerol) pocket.

The protein belongs to the Lgt family.

The protein resides in the cell inner membrane. It catalyses the reaction L-cysteinyl-[prolipoprotein] + a 1,2-diacyl-sn-glycero-3-phospho-(1'-sn-glycerol) = an S-1,2-diacyl-sn-glyceryl-L-cysteinyl-[prolipoprotein] + sn-glycerol 1-phosphate + H(+). It participates in protein modification; lipoprotein biosynthesis (diacylglyceryl transfer). Catalyzes the transfer of the diacylglyceryl group from phosphatidylglycerol to the sulfhydryl group of the N-terminal cysteine of a prolipoprotein, the first step in the formation of mature lipoproteins. The protein is Phosphatidylglycerol--prolipoprotein diacylglyceryl transferase of Pseudomonas aeruginosa (strain LESB58).